A 212-amino-acid polypeptide reads, in one-letter code: MKASLADARLYLCVDSRRRQGDLPAFLDAVLGAGVDVVQLREKGLEAKEELRLLDVFAEACRRHGALLAVNDRADIAYAARSDVLHLGQDDLPVGIARSIVGDDVVIGLSTHSVEQVQAAVSDPAVDYFCVGPCWPTPTKPGRPAAGLDVVRYAAQAAGDRPWFAIGGINLQNLDEVLEAGARRVVVVRAIADAPDPAEAAAEFAARLAAAA.

Residues 39–43 and N71 contribute to the 4-amino-2-methyl-5-(diphosphooxymethyl)pyrimidine site; that span reads QLREK. Positions 72 and 91 each coordinate Mg(2+). S110 contacts 4-amino-2-methyl-5-(diphosphooxymethyl)pyrimidine. Position 137-139 (137-139) interacts with 2-[(2R,5Z)-2-carboxy-4-methylthiazol-5(2H)-ylidene]ethyl phosphate; it reads TPT. K140 provides a ligand contact to 4-amino-2-methyl-5-(diphosphooxymethyl)pyrimidine. G168 serves as a coordination point for 2-[(2R,5Z)-2-carboxy-4-methylthiazol-5(2H)-ylidene]ethyl phosphate.

The protein belongs to the thiamine-phosphate synthase family. Mg(2+) is required as a cofactor.

It catalyses the reaction 2-[(2R,5Z)-2-carboxy-4-methylthiazol-5(2H)-ylidene]ethyl phosphate + 4-amino-2-methyl-5-(diphosphooxymethyl)pyrimidine + 2 H(+) = thiamine phosphate + CO2 + diphosphate. It carries out the reaction 2-(2-carboxy-4-methylthiazol-5-yl)ethyl phosphate + 4-amino-2-methyl-5-(diphosphooxymethyl)pyrimidine + 2 H(+) = thiamine phosphate + CO2 + diphosphate. The enzyme catalyses 4-methyl-5-(2-phosphooxyethyl)-thiazole + 4-amino-2-methyl-5-(diphosphooxymethyl)pyrimidine + H(+) = thiamine phosphate + diphosphate. It functions in the pathway cofactor biosynthesis; thiamine diphosphate biosynthesis; thiamine phosphate from 4-amino-2-methyl-5-diphosphomethylpyrimidine and 4-methyl-5-(2-phosphoethyl)-thiazole: step 1/1. Its function is as follows. Condenses 4-methyl-5-(beta-hydroxyethyl)thiazole monophosphate (THZ-P) and 2-methyl-4-amino-5-hydroxymethyl pyrimidine pyrophosphate (HMP-PP) to form thiamine monophosphate (TMP). In Acidothermus cellulolyticus (strain ATCC 43068 / DSM 8971 / 11B), this protein is Thiamine-phosphate synthase.